Here is a 73-residue protein sequence, read N- to C-terminus: Photosystem I reaction center subunit IV (73 aa).

It belongs to the PsaE family.

The protein resides in the cellular thylakoid membrane. Stabilizes the interaction between PsaC and the PSI core, assists the docking of the ferredoxin to PSI and interacts with ferredoxin-NADP oxidoreductase. This is Photosystem I reaction center subunit IV from Synechococcus sp. (strain JA-3-3Ab) (Cyanobacteria bacterium Yellowstone A-Prime).